The sequence spans 158 residues: Transcription elongation factor GreA (158 aa).

Residues 47 to 74 (AEYHAAKEEQSHNEGRINELEDKLARAD) are a coiled coil.

This sequence belongs to the GreA/GreB family.

Its function is as follows. Necessary for efficient RNA polymerase transcription elongation past template-encoded arresting sites. The arresting sites in DNA have the property of trapping a certain fraction of elongating RNA polymerases that pass through, resulting in locked ternary complexes. Cleavage of the nascent transcript by cleavage factors such as GreA or GreB allows the resumption of elongation from the new 3'terminus. GreA releases sequences of 2 to 3 nucleotides. The polypeptide is Transcription elongation factor GreA (Rhodopseudomonas palustris (strain ATCC BAA-98 / CGA009)).